The sequence spans 63 residues: MIVVPVKEGENIERALKRFKRKFEKTGAVRELRARQAFEKPSVAKRKKMQKAIYMKQLQVAEE.

This sequence belongs to the bacterial ribosomal protein bS21 family.

The polypeptide is Small ribosomal subunit protein bS21 (Porphyromonas gingivalis (strain ATCC 33277 / DSM 20709 / CIP 103683 / JCM 12257 / NCTC 11834 / 2561)).